The chain runs to 452 residues: Down-regulator of invasive growth 1 (452 aa).

Disordered stretches follow at residues 1 to 145 (MAVS…SAPA) and 262 to 311 (RNKR…ADLR). Composition is skewed to polar residues over residues 12 to 22 (EDTSIAKSTQD) and 35 to 53 (KGSSDSNIKNSPGGNSVGQ). S45 carries the phosphoserine modification. Positions 61 to 77 (PEEDDSGDKEADHEDSE) are enriched in acidic residues. Over residues 81–100 (AKKRKAQPLKNPKKSLKRGR) the composition is skewed to basic residues. Composition is skewed to polar residues over residues 107 to 116 (LSDSNTNTHG), 124 to 145 (LASSNSAHFPPVANQNVKSAPA), 269 to 281 (SYDSPLSGTASTG), and 291 to 307 (RNSSVGSSANAGPTQQR). A phosphoserine mark is found at S126, S142, S272, and S275. The tract at residues 212–452 (IPPPHMLNKP…KSSSHHRTGK (241 aa)) is interaction with FUS3 and KSS1. Position 330 is a phosphoserine (S330). Low complexity predominate over residues 331 to 348 (ANTKARSASTSTSTSTST). Residues 331-395 (ANTKARSAST…QRTSQPQQQS (65 aa)) form a disordered region. Residues 349 to 361 (NRDRSSWHEAEPN) show a composition bias toward basic and acidic residues. Residues 362-372 (KDEEEGTDLAI) are compositionally biased toward acidic residues. Residues 378-395 (PTPTFTTFQRTSQPQQQS) are compositionally biased toward low complexity. T379 bears the Phosphothreonine mark. Phosphoserine is present on residues S395 and S428.

Forms a complex with DIG2, STE12 and either FUS3 or KSS1. The interaction of FUS3 with STE12 depends on the presence of both DIG1 and DIG2. STE12 is lost from FUS3/DIG1/DIG2 complex after pheromone treatment. DIG1 and DIG2 have also been reported to interact with CLN1 and CLN2. Post-translationally, phosphorylated by FUS3 and KSS1, in a pheromone-stimulated manner. Phosphorylation reduces the affinity for STE12.

Its subcellular location is the nucleus. In terms of biological role, DIG1 and DIG2 are negative regulators of the filamentation and pheromone induced mating program. DIG1 and DIG2 inhibit the transcriptional activity of STE12 by direct protein-protein interaction. DIG1 colocalizes to promoters with STE12 and redistributes with it during induction of filamentation (by butanol) or mating (by pheromone) to program specific genes, but binding of DIG1 to STE12 is reduced by pheromone treatment. This chain is Down-regulator of invasive growth 1 (DIG1), found in Saccharomyces cerevisiae (strain ATCC 204508 / S288c) (Baker's yeast).